The sequence spans 227 residues: MAYPFQLGFQDATSPIMEELLHFHDHTLMIVFLISSLVLYIITLMLTTKLTHTSTMDAQEVETVWTILPAIILILIALPSLRILYMMDEVNNPSLTVKTMGHQWYWSYEYTDYEDLSFDSYMIPTSDLKPGELRLLEVDNRVILPMEMTIRMLVSSEDVLHSWAVPSLGLKTDAIPGRLNQTTLMSTRPGLFYGQCSEICGSNHSFMPIVLELVPLEIFEKWSASML.

The Mitochondrial intermembrane segment spans residues 1 to 14 (MAYPFQLGFQDATS). Residues 15-45 (PIMEELLHFHDHTLMIVFLISSLVLYIITLM) form a helical membrane-spanning segment. At 46–59 (LTTKLTHTSTMDAQ) the chain is on the mitochondrial matrix side. Residues 60-87 (EVETVWTILPAIILILIALPSLRILYMM) form a helical membrane-spanning segment. Residues 88 to 227 (DEVNNPSLTV…IFEKWSASML (140 aa)) are Mitochondrial intermembrane-facing. Cu cation contacts are provided by H161, C196, E198, C200, H204, and M207. E198 provides a ligand contact to Mg(2+).

This sequence belongs to the cytochrome c oxidase subunit 2 family. In terms of assembly, component of the cytochrome c oxidase (complex IV, CIV), a multisubunit enzyme composed of 14 subunits. The complex is composed of a catalytic core of 3 subunits MT-CO1, MT-CO2 and MT-CO3, encoded in the mitochondrial DNA, and 11 supernumerary subunits COX4I, COX5A, COX5B, COX6A, COX6B, COX6C, COX7A, COX7B, COX7C, COX8 and NDUFA4, which are encoded in the nuclear genome. The complex exists as a monomer or a dimer and forms supercomplexes (SCs) in the inner mitochondrial membrane with NADH-ubiquinone oxidoreductase (complex I, CI) and ubiquinol-cytochrome c oxidoreductase (cytochrome b-c1 complex, complex III, CIII), resulting in different assemblies (supercomplex SCI(1)III(2)IV(1) and megacomplex MCI(2)III(2)IV(2)). Found in a complex with TMEM177, COA6, COX18, COX20, SCO1 and SCO2. Interacts with TMEM177 in a COX20-dependent manner. Interacts with COX20. Interacts with COX16. Cu cation is required as a cofactor.

Its subcellular location is the mitochondrion inner membrane. It catalyses the reaction 4 Fe(II)-[cytochrome c] + O2 + 8 H(+)(in) = 4 Fe(III)-[cytochrome c] + 2 H2O + 4 H(+)(out). Its function is as follows. Component of the cytochrome c oxidase, the last enzyme in the mitochondrial electron transport chain which drives oxidative phosphorylation. The respiratory chain contains 3 multisubunit complexes succinate dehydrogenase (complex II, CII), ubiquinol-cytochrome c oxidoreductase (cytochrome b-c1 complex, complex III, CIII) and cytochrome c oxidase (complex IV, CIV), that cooperate to transfer electrons derived from NADH and succinate to molecular oxygen, creating an electrochemical gradient over the inner membrane that drives transmembrane transport and the ATP synthase. Cytochrome c oxidase is the component of the respiratory chain that catalyzes the reduction of oxygen to water. Electrons originating from reduced cytochrome c in the intermembrane space (IMS) are transferred via the dinuclear copper A center (CU(A)) of subunit 2 and heme A of subunit 1 to the active site in subunit 1, a binuclear center (BNC) formed by heme A3 and copper B (CU(B)). The BNC reduces molecular oxygen to 2 water molecules using 4 electrons from cytochrome c in the IMS and 4 protons from the mitochondrial matrix. The chain is Cytochrome c oxidase subunit 2 (MT-CO2) from Balaenoptera borealis (Sei whale).